A 329-amino-acid polypeptide reads, in one-letter code: Putative helicase 109L (329 aa).

The Helicase ATP-binding domain maps to 105–259 (LTLLTQHKSC…LFDMFFGPEM (155 aa)). ATP is bound at residue 118–125 (CYTGFGKT). The DEAH box signature appears at 212-215 (DEAH).

It belongs to the DEAD box helicase family. DEAH subfamily.

The sequence is that of Putative helicase 109L from Invertebrate iridescent virus 3 (IIV-3).